A 110-amino-acid polypeptide reads, in one-letter code: Pathogenesis-related protein (110 aa).

Positions 1 to 19 are cleaved as a signal peptide; sequence AFLLAATLTISSHMQEAGA.

The protein belongs to the thaumatin family.

The protein is Pathogenesis-related protein of Juniperus virginiana (Eastern redcedar).